Consider the following 955-residue polypeptide: Centrosomal protein of 112 kDa (955 aa).

Positions 277–954 (QKHDADVQKI…QEELTTYQGR (678 aa)) form a coiled coil.

The protein localises to the cytoplasm. The protein resides in the cytoskeleton. It localises to the microtubule organizing center. Its subcellular location is the centrosome. This chain is Centrosomal protein of 112 kDa (CEP112), found in Homo sapiens (Human).